The following is a 708-amino-acid chain: Fatty acid oxidation complex subunit alpha (708 aa).

The interval 1–190 (MDMEKTFNLT…KMGLVDDAVP (190 aa)) is enoyl-CoA hydratase. Residues 310–708 (QKVNKVMVLG…MAEEGTRFFS (399 aa)) form a 3-hydroxyacyl-CoA dehydrogenase region.

In the N-terminal section; belongs to the enoyl-CoA hydratase/isomerase family. This sequence in the central section; belongs to the 3-hydroxyacyl-CoA dehydrogenase family. Heterotetramer of two alpha chains (FadJ) and two beta chains (FadI).

The protein localises to the cytoplasm. It catalyses the reaction a (3S)-3-hydroxyacyl-CoA = a (2E)-enoyl-CoA + H2O. The catalysed reaction is a 4-saturated-(3S)-3-hydroxyacyl-CoA = a (3E)-enoyl-CoA + H2O. It carries out the reaction a (3S)-3-hydroxyacyl-CoA + NAD(+) = a 3-oxoacyl-CoA + NADH + H(+). The enzyme catalyses (3S)-3-hydroxybutanoyl-CoA = (3R)-3-hydroxybutanoyl-CoA. Its pathway is lipid metabolism; fatty acid beta-oxidation. Functionally, catalyzes the formation of a hydroxyacyl-CoA by addition of water on enoyl-CoA. Also exhibits 3-hydroxyacyl-CoA epimerase and 3-hydroxyacyl-CoA dehydrogenase activities. The chain is Fatty acid oxidation complex subunit alpha from Shewanella halifaxensis (strain HAW-EB4).